Reading from the N-terminus, the 516-residue chain is MPSGSHWTANSSKIITWLLEQPGKEEKRKTMAKVNRARSTSPPDGGWGWMIVAGCFLVTICTRAVTRCISIFFVEFQTYFTQDYAQTAWIHSIVDCVTMLCAPLGSVVSNHLSCQVGIMLGGLLASTGLILSSFATSLKHLYLTLGVLTGLGFALCYSPAIAMVGKYFSRRKALAYGIAMSGSGIGTFILAPVVQLLIEQFSWRGALLILGGFVLNLCVCGALMRPITLKEDHTTPEQNHVCRTQKEDIKRVSPYSSLTKEWAQTCLCCCLQQEYSFLLMSDFVVLAVSVLFMAYGCSPLFVYLVPYALSVGVSHQQAAFLMSILGVIDIIGNITFGWLTDRRCLKNYQYVCYLFAVGMDGLCYLCLPMLQSLPLLVPFSCTFGYFDGAYVTLIPVVTTEIVGTTSLSSALGVVYFLHAVPYLVSPPIAGRLVDTTGSYTAAFLLCGFSMIFSSVLLGFARLIKRMRKTQLQFIAKESDPKLQLWTNGSVAYSVARELDQKHGEPVATAVPGYSLT.

Residues 1 to 50 are Cytoplasmic-facing; that stretch reads MPSGSHWTANSSKIITWLLEQPGKEEKRKTMAKVNRARSTSPPDGGWGWM. 12 helical membrane-spanning segments follow: residues 51-73, 88-108, 116-136, 145-165, 178-198, 207-227, 283-303, 319-339, 350-370, 377-397, 410-430, and 440-460; these read IVAGCFLVTICTRAVTRCISIFF, AWIHSIVDCVTMLCAPLGSVV, VGIMLGGLLASTGLILSSFAT, LGVLTGLGFALCYSPAIAMVG, IAMSGSGIGTFILAPVVQLLI, LLILGGFVLNLCVCGALMRPI, FVVLAVSVLFMAYGCSPLFVY, AFLMSILGVIDIIGNITFGWL, YVCYLFAVGMDGLCYLCLPML, VPFSCTFGYFDGAYVTLIPVV, ALGVVYFLHAVPYLVSPPIAG, and TAAFLLCGFSMIFSSVLLGFA. Residues 461-516 are Cytoplasmic-facing; sequence RLIKRMRKTQLQFIAKESDPKLQLWTNGSVAYSVARELDQKHGEPVATAVPGYSLT.

The protein belongs to the major facilitator superfamily. Monocarboxylate porter (TC 2.A.1.13) family. Interacts with isoform 2 of BSG; this interaction is required for its localization to the plasma membrane. As to expression, most highly expressed in kidney, followed by retina, lung, heart and testis. Very weakly expressed in brain and liver. Also detected in lens.

It is found in the cell membrane. It localises to the basolateral cell membrane. It catalyses the reaction creatine(in) = creatine(out). It carries out the reaction guanidinoacetate(in) = guanidinoacetate(out). Its activity is regulated as follows. Creatine uptake is inhibited by carbonyl cyanide 3-chlorophenylhydrazone (CCCP) and by valinomycin. In terms of biological role, functions as a transporter for creatine and as well for its precursor guanidinoacetate. Transport of creatine and GAA is independent of resting membrane potential and extracellular Na(+), Cl(-), or pH. Contributes to the process of creatine biosynthesis and distribution. This chain is Monocarboxylate transporter 12, found in Homo sapiens (Human).